A 302-amino-acid chain; its full sequence is Probable alpha-L-glutamate ligase (302 aa).

The region spanning 104–287 (MQLLSRKGIG…IAGMVFEFLE (184 aa)) is the ATP-grasp domain. Residues K141, 178–179 (EF), D187, and 211–213 (RSN) contribute to the ATP site. Positions 248, 260, and 262 each coordinate Mg(2+). The Mn(2+) site is built by D248, E260, and N262.

This sequence belongs to the RimK family. Mg(2+) is required as a cofactor. Requires Mn(2+) as cofactor.

This Psychromonas ingrahamii (strain DSM 17664 / CCUG 51855 / 37) protein is Probable alpha-L-glutamate ligase.